The chain runs to 280 residues: Acyl-[acyl-carrier-protein]--UDP-N-acetylglucosamine O-acyltransferase (280 aa).

It belongs to the transferase hexapeptide repeat family. LpxA subfamily. In terms of assembly, homotrimer.

The protein localises to the cytoplasm. The enzyme catalyses a (3R)-hydroxyacyl-[ACP] + UDP-N-acetyl-alpha-D-glucosamine = a UDP-3-O-[(3R)-3-hydroxyacyl]-N-acetyl-alpha-D-glucosamine + holo-[ACP]. It participates in glycolipid biosynthesis; lipid IV(A) biosynthesis; lipid IV(A) from (3R)-3-hydroxytetradecanoyl-[acyl-carrier-protein] and UDP-N-acetyl-alpha-D-glucosamine: step 1/6. Involved in the biosynthesis of lipid A, a phosphorylated glycolipid that anchors the lipopolysaccharide to the outer membrane of the cell. This Chlamydia muridarum (strain MoPn / Nigg) protein is Acyl-[acyl-carrier-protein]--UDP-N-acetylglucosamine O-acyltransferase.